A 237-amino-acid chain; its full sequence is DNA repair protein RecO (237 aa).

This sequence belongs to the RecO family.

In terms of biological role, involved in DNA repair and RecF pathway recombination. The polypeptide is DNA repair protein RecO (Rickettsia peacockii (strain Rustic)).